Reading from the N-terminus, the 968-residue chain is Sorting nexin-13 (968 aa).

The PXA domain maps to 97-284 (ANIIDEPLQQ…YVIWMIRDSN (188 aa)). Positions 373–496 (PLDSILVDNV…RKVYELMLRD (124 aa)) constitute an RGS domain. The PX domain maps to 570 to 691 (YADYDPYAVA…DFLENKAYSK (122 aa)). Arginine 612, serine 614, lysine 639, and arginine 653 together coordinate a 1,2-diacyl-sn-glycero-3-phospho-(1D-myo-inositol-3-phosphate).

It belongs to the sorting nexin family.

The protein localises to the early endosome membrane. May be involved in several stages of intracellular trafficking. May play a role in endosome homeostasis. Acts as a GAP for Galphas. In Homo sapiens (Human), this protein is Sorting nexin-13 (SNX13).